The sequence spans 250 residues: Probable transcriptional regulatory protein Lferr_0060 (250 aa).

Belongs to the TACO1 family.

Its subcellular location is the cytoplasm. This chain is Probable transcriptional regulatory protein Lferr_0060, found in Acidithiobacillus ferrooxidans (strain ATCC 53993 / BNL-5-31) (Leptospirillum ferrooxidans (ATCC 53993)).